The chain runs to 178 residues: PRA1 family protein 2 (178 aa).

Over 1-41 the chain is Cytoplasmic; that stretch reads MSEVRLPPLRALDDFVLGSARLAAPDPCDPQRWCHRVINNL. Residues 42-62 traverse the membrane as a helical segment; that stretch reads LYYQTNYLLCFGIGLALAGYV. Over 63–64 the chain is Extracellular; the sequence is RP. Residues 65 to 85 form a helical membrane-spanning segment; that stretch reads LHTLLSALVVAVALGMLVWAA. Topologically, residues 86-96 are cytoplasmic; the sequence is ETRAAVRRCRR. Residues 97-119 form a helical membrane-spanning segment; that stretch reads SHPAACLAAVLAVGLLVLWVVGG. At 120–122 the chain is on the extracellular side; sequence ACT. Residues 123 to 140 form a helical membrane-spanning segment; sequence FLLSIAGPVLLILVHASL. Residues 141–178 are Cytoplasmic-facing; it reads RLRNLKNKIENKIESIGLKRTPMGLLLEALGQEQEAGS.

Belongs to the PRA1 family. Interacts with CCR5 and GDE1.

The protein localises to the endosome membrane. In terms of biological role, may be involved in ER/Golgi transport and vesicular traffic. Plays a proapoptotic role in cerulenin-induced neuroblastoma apoptosis. In Macaca fascicularis (Crab-eating macaque), this protein is PRA1 family protein 2 (PRAF2).